The primary structure comprises 118 residues: MAAEEGQVIGCHTVEAWNEQLQKGNDTKGLIVVDFTASWCGPCRFIAPFLAELAKKLPNVTFLKVDVDELKTVAHEWAVESMPTFMFLKEGKIMDKVVGAKKDELQQTIAKHMATAST.

Residues 2 to 114 (AAEEGQVIGC…LQQTIAKHMA (113 aa)) enclose the Thioredoxin domain. Catalysis depends on nucleophile residues Cys40 and Cys43. The cysteines at positions 40 and 43 are disulfide-linked.

The protein belongs to the thioredoxin family. Plant H-type subfamily.

It is found in the cytoplasm. Functionally, participates in various redox reactions through the reversible oxidation of the active center dithiol to a disulfide. The H form is known to activate a number of cytosolic enzymes. The sequence is that of Thioredoxin H-type from Ricinus communis (Castor bean).